Here is a 237-residue protein sequence, read N- to C-terminus: 2-C-methyl-D-erythritol 4-phosphate cytidylyltransferase (237 aa).

The protein belongs to the IspD/TarI cytidylyltransferase family. IspD subfamily.

It carries out the reaction 2-C-methyl-D-erythritol 4-phosphate + CTP + H(+) = 4-CDP-2-C-methyl-D-erythritol + diphosphate. The protein operates within isoprenoid biosynthesis; isopentenyl diphosphate biosynthesis via DXP pathway; isopentenyl diphosphate from 1-deoxy-D-xylulose 5-phosphate: step 2/6. Catalyzes the formation of 4-diphosphocytidyl-2-C-methyl-D-erythritol from CTP and 2-C-methyl-D-erythritol 4-phosphate (MEP). In Acidithiobacillus ferrooxidans (strain ATCC 23270 / DSM 14882 / CIP 104768 / NCIMB 8455) (Ferrobacillus ferrooxidans (strain ATCC 23270)), this protein is 2-C-methyl-D-erythritol 4-phosphate cytidylyltransferase.